The following is a 165-amino-acid chain: Large ribosomal subunit protein uL10 (165 aa).

Belongs to the universal ribosomal protein uL10 family. In terms of assembly, part of the ribosomal stalk of the 50S ribosomal subunit. The N-terminus interacts with L11 and the large rRNA to form the base of the stalk. The C-terminus forms an elongated spine to which L12 dimers bind in a sequential fashion forming a multimeric L10(L12)X complex.

Functionally, forms part of the ribosomal stalk, playing a central role in the interaction of the ribosome with GTP-bound translation factors. The protein is Large ribosomal subunit protein uL10 of Borrelia turicatae (strain 91E135).